The primary structure comprises 341 residues: Anthranilate phosphoribosyltransferase (341 aa).

Residues G84, 87-88 (GD), T92, 94-97 (NVTT), 112-120 (KCGNRSVSS), and S124 each bind 5-phospho-alpha-D-ribose 1-diphosphate. G84 provides a ligand contact to anthranilate. T96 contributes to the Mg(2+) binding site. Residue N115 participates in anthranilate binding. R170 is an anthranilate binding site. D228 and E229 together coordinate Mg(2+).

It belongs to the anthranilate phosphoribosyltransferase family. As to quaternary structure, homodimer. Mg(2+) is required as a cofactor.

It catalyses the reaction N-(5-phospho-beta-D-ribosyl)anthranilate + diphosphate = 5-phospho-alpha-D-ribose 1-diphosphate + anthranilate. The protein operates within amino-acid biosynthesis; L-tryptophan biosynthesis; L-tryptophan from chorismate: step 2/5. Catalyzes the transfer of the phosphoribosyl group of 5-phosphorylribose-1-pyrophosphate (PRPP) to anthranilate to yield N-(5'-phosphoribosyl)-anthranilate (PRA). The chain is Anthranilate phosphoribosyltransferase from Corynebacterium diphtheriae (strain ATCC 700971 / NCTC 13129 / Biotype gravis).